Here is a 242-residue protein sequence, read N- to C-terminus: uncharacterized protein (242 aa).

Residues 1–11 (MNFEAASAPSQ) are compositionally biased toward low complexity. A disordered region spans residues 1 to 45 (MNFEAASAPSQQPSPTPAPKTEEPKENGGSEQQADQPENSKKDDV).

To U.parvum UU171.

This is an uncharacterized protein from Ureaplasma parvum serovar 3 (strain ATCC 700970).